Reading from the N-terminus, the 302-residue chain is Uricase (302 aa).

Position 2 is an N-acetylserine (S2). Catalysis depends on charge relay system residues K11 and T58. The 5-hydroxyisourate site is built by T58, D59, F160, R177, V228, Q229, and N255. T58 is a binding site for O2. Urate contacts are provided by T58, D59, F160, R177, V228, Q229, and N255. Residue N255 coordinates O2. Catalysis depends on H257, which acts as the Charge relay system. Residues 300–302 (SKL) carry the Microbody targeting signal motif.

It belongs to the uricase family. As to quaternary structure, homotetramer.

The protein localises to the peroxisome. It carries out the reaction urate + O2 + H2O = 5-hydroxyisourate + H2O2. Its pathway is purine metabolism; urate degradation; (S)-allantoin from urate: step 1/3. 8-Azaxanthine is one of the most potent competitive inhibitors of uricase activity. Hypoxanthine has only a small inhibitor effect, and caffeine has no effect at all. Azide not only competes with dioxygen but also competes with the substrate for its enzymatic site. In terms of biological role, urate oxidase is a cofactorless enzyme involved in the metabolism of purines. Catalyzes, in the presence of molecular oxygen, the hydroxylation of uric acid to metastable 5-hydroxyisourate (5-HIU) which is further degraded to allantoin. The protein is Uricase of Aspergillus flavus.